The following is a 312-amino-acid chain: Plasma membrane-associated coenzyme Q6 reductase PGA3 (312 aa).

The Extracellular segment spans residues 1-15 (MSKEDIEGTNILDEP). Residues 16–36 (VHGIYIPAALFVVGVAITTYM) form a helical membrane-spanning segment. Residues 37–39 (SGE) are Cytoplasmic-facing. The helical transmembrane segment at 40 to 60 (LKILWSLPILFMIIFVRAYSA) threads the bilayer. Residues 61-179 (YKRRRSLYPD…LNYEPNSSKH (119 aa)) are Extracellular-facing. Positions 70–173 (DRWTSLELED…KGPIGTLNYE (104 aa)) constitute an FAD-binding FR-type domain. FAD is bound by residues 153–168 (AGLN…GPIG) and 179–211 (HLGI…KVSL). A helical transmembrane segment spans residues 180–200 (LGIVAGGSGITPVLQILNEII). The Cytoplasmic portion of the chain corresponds to 201 to 312 (TVPEDLTKVS…SSGDDQVFVF (112 aa)).

This sequence belongs to the flavoprotein pyridine nucleotide cytochrome reductase family. Requires FAD as cofactor.

It is found in the cell membrane. The protein localises to the endoplasmic reticulum membrane. The catalysed reaction is 2 Fe(III)-[cytochrome b5] + NADH = 2 Fe(II)-[cytochrome b5] + NAD(+) + H(+). Its activity is regulated as follows. Inhibited by diphenylene iodonium (DPI). Functionally, NADH-dependent cytochrome b5 reductase that reduces coenzyme Q6 at the plasma membrane and mediates lifespan extension by calorie restriction by shifting fermentative to respiratory metabolism, probably through modulating the NAD(+)/NADH ratio. In Saccharomyces cerevisiae (strain ATCC 204508 / S288c) (Baker's yeast), this protein is Plasma membrane-associated coenzyme Q6 reductase PGA3 (PGA3).